A 481-amino-acid polypeptide reads, in one-letter code: Mediator of RNA polymerase II transcription subunit 3 (481 aa).

Positions 79–107 (QEKFQMIRSKVLGLTERLQELSNDFEELQ) form a coiled coil. 2 disordered regions span residues 140-261 (AGAS…MGTP) and 415-463 (NTKG…KSAY). The span at 148 to 203 (TPTPAAATPTTAPTPGAGTKKAAKTAPTPTATATIGTPSNNAPTPATTATTPGTQA) shows a compositional bias: low complexity. The segment covering 204-213 (KKPRKPRQTK) has biased composition (basic residues). Residues 214–248 (KQQQAAAAAAAVAQAQAQAQAQAQNQNQNNMQNKN) are compositionally biased toward low complexity. A compositionally biased stretch (polar residues) spans 249–259 (ISNPGMNSNMG). Residues 428 to 458 (MDQNQNQNQSQNQSQNQNQSMNMNMNNDSNN) are compositionally biased toward low complexity.

The protein belongs to the Mediator complex subunit 3 family. In terms of assembly, component of the Mediator complex.

Its subcellular location is the nucleus. Component of the Mediator complex, a coactivator involved in regulated gene transcription of nearly all RNA polymerase II-dependent genes. Mediator functions as a bridge to convey information from gene-specific regulatory proteins to the basal RNA polymerase II transcription machinery. Mediator is recruited to promoters by direct interactions with regulatory proteins and serves as a scaffold for the assembly of a functional preinitiation complex with RNA polymerase II and the general transcription factors. This is Mediator of RNA polymerase II transcription subunit 3 (PGD1) from Candida glabrata (strain ATCC 2001 / BCRC 20586 / JCM 3761 / NBRC 0622 / NRRL Y-65 / CBS 138) (Yeast).